Consider the following 78-residue polypeptide: Probable [Fe-S]-dependent transcriptional repressor (78 aa).

4 residues coordinate iron-sulfur cluster: cysteine 56, cysteine 61, cysteine 64, and cysteine 70.

The protein belongs to the FeoC family.

In terms of biological role, may function as a transcriptional regulator that controls feoABC expression. The chain is Probable [Fe-S]-dependent transcriptional repressor from Citrobacter koseri (strain ATCC BAA-895 / CDC 4225-83 / SGSC4696).